We begin with the raw amino-acid sequence, 339 residues long: D-erythrose-4-phosphate dehydrogenase (339 aa).

Residues 12–13 (RI) and arginine 81 contribute to the NAD(+) site. Residues 154-156 (SCT), arginine 200, 213-214 (TK), and arginine 236 contribute to the substrate site. Residue cysteine 155 is the Nucleophile of the active site. Residue asparagine 318 participates in NAD(+) binding.

The protein belongs to the glyceraldehyde-3-phosphate dehydrogenase family. Epd subfamily. Homotetramer.

Its subcellular location is the cytoplasm. The enzyme catalyses D-erythrose 4-phosphate + NAD(+) + H2O = 4-phospho-D-erythronate + NADH + 2 H(+). It functions in the pathway cofactor biosynthesis; pyridoxine 5'-phosphate biosynthesis; pyridoxine 5'-phosphate from D-erythrose 4-phosphate: step 1/5. In terms of biological role, catalyzes the NAD-dependent conversion of D-erythrose 4-phosphate to 4-phosphoerythronate. In Escherichia fergusonii (strain ATCC 35469 / DSM 13698 / CCUG 18766 / IAM 14443 / JCM 21226 / LMG 7866 / NBRC 102419 / NCTC 12128 / CDC 0568-73), this protein is D-erythrose-4-phosphate dehydrogenase.